The sequence spans 38 residues: Large ribosomal subunit protein bL36 (38 aa).

This sequence belongs to the bacterial ribosomal protein bL36 family.

This Azotobacter vinelandii (strain DJ / ATCC BAA-1303) protein is Large ribosomal subunit protein bL36.